The primary structure comprises 840 residues: V-type proton ATPase 116 kDa subunit a 4 (840 aa).

Topologically, residues 1-390 are cytoplasmic; the sequence is MVSVFRSEEM…DAYGVGSYRE (390 aa). The chain crosses the membrane as a helical span at residues 391 to 409; sequence INPAPYTIITFPFLFAVMF. Residues 410-411 are Vacuolar-facing; that stretch reads GD. A helical membrane pass occupies residues 412 to 428; it reads CGHGTVMLLAALWMILN. Residues 429-443 are Cytoplasmic-facing; sequence ERRLLSQKTDNEIWN. Residues 444-473 form a helical membrane-spanning segment; the sequence is TFFHGRYLILLMGIFSIYTGLIYNDCFSKS. Residues 474–538 lie on the Vacuolar side of the membrane; sequence LNIFGSSWSV…ASNKLTFLNS (65 aa). A helical membrane pass occupies residues 539 to 558; it reads YKMKMSVILGIVQMVFGVIL. Residues 559–576 are Cytoplasmic-facing; sequence SLFNHIYFRRTLNIILQF. A helical membrane pass occupies residues 577 to 597; sequence IPEMIFILCLFGYLVFMIIFK. Over 598–642 the chain is Vacuolar; it reads WCCFDVHVSQHAPSILIHFINMFLFNYSDSSNAPLYKHQQEVQSF. The helical transmembrane segment at 643–662 threads the bilayer; it reads FVVMALISVPWMLLIKPFIL. Topologically, residues 663-727 are cytoplasmic; sequence RASHRKSQLQ…DVFVHQAIHT (65 aa). The disordered stretch occupies residues 675 to 704; the sequence is RIQEDATENIEGDSSSPSSRSGQRTSADTH. A helical membrane pass occupies residues 728 to 752; the sequence is IEYCLGCISNTASYLRLWALSLAHA. The Vacuolar portion of the chain corresponds to 753-773; sequence QLSEVLWTMVMNSGLQTRGWG. A helical transmembrane segment spans residues 774–812; that stretch reads GIVGVFIIFAVFAVLTVAILLIMEGLSAFLHALRLHWVE. Residues 813–840 lie on the Cytoplasmic side of the membrane; sequence FQNKFYVGDGYKFSPFSFKHILDGTAEE.

This sequence belongs to the V-ATPase 116 kDa subunit family. In terms of assembly, V-ATPase is a heteromultimeric enzyme made up of two complexes: the ATP-hydrolytic V1 complex and the proton translocation V0 complex. The V1 complex consists of three catalytic AB heterodimers that form a heterohexamer, three peripheral stalks each consisting of EG heterodimers, one central rotor including subunits D and F, and the regulatory subunits C and H. The proton translocation complex V0 consists of the proton transport subunit a, a ring of proteolipid subunits c9c'', rotary subunit d, subunits e and f, and the accessory subunits ATP6AP1/Ac45 and ATP6AP2/PRR. Interacts with the V1 complex V-ATPase subunit A ATP6V1A. Interacts with the V0 complex V-ATPase subunit c ATP6V0C. In terms of tissue distribution, expressed in adult and fetal kidney. Found in the inner ear.

The protein localises to the apical cell membrane. Its subcellular location is the basolateral cell membrane. Functionally, subunit of the V0 complex of vacuolar(H+)-ATPase (V-ATPase), a multisubunit enzyme composed of a peripheral complex (V1) that hydrolyzes ATP and a membrane integral complex (V0) that translocates protons. V-ATPase is responsible for acidifying and maintaining the pH of intracellular compartments and in some cell types, is targeted to the plasma membrane, where it is responsible for acidifying the extracellular environment. Involved in normal vectorial acid transport into the urine by the kidney. In Homo sapiens (Human), this protein is V-type proton ATPase 116 kDa subunit a 4 (ATP6V0A4).